The following is a 118-amino-acid chain: MHEYSIVASLIQMCESHAKEHNAASIAKVCIAVGERSGVDSALVKSAFETFRLDSPLCQNTILEIQSQSVELECRDCGHYFQAQNLTYSTCPQCQSHNVIIAKGKELHLLSLELDIQS.

His-2 serves as a coordination point for Ni(2+). Cys-74, Cys-77, Cys-91, and Cys-94 together coordinate Zn(2+).

The protein belongs to the HypA/HybF family.

Involved in the maturation of [NiFe] hydrogenases. Required for nickel insertion into the metal center of the hydrogenase. The protein is Hydrogenase maturation factor HypA of Helicobacter hepaticus (strain ATCC 51449 / 3B1).